The chain runs to 1486 residues: Chromosome partition protein MukB (1486 aa).

34–41 contributes to the ATP binding site; the sequence is GGNGAGKS. 3 coiled-coil regions span residues 326–418, 444–480, and 509–603; these read LEAD…QYNQ, LETF…QAYQ, and RHLA…RAPV. Positions 666–783 are flexible hinge; sequence PGGSEDQRLN…EVPLFGRAAR (118 aa). Coiled-coil stretches lie at residues 835–923, 977–1115, and 1209–1266; these read EAEI…AKLE, EMLS…TAKA, and VEAI…QNVS.

Belongs to the SMC family. MukB subfamily. Homodimerization via its hinge domain. Binds to DNA via its C-terminal region. Interacts, and probably forms a ternary complex, with MukE and MukF via its C-terminal region. The complex formation is stimulated by calcium or magnesium. Interacts with tubulin-related protein FtsZ.

It is found in the cytoplasm. It localises to the nucleoid. In terms of biological role, plays a central role in chromosome condensation, segregation and cell cycle progression. Functions as a homodimer, which is essential for chromosome partition. Involved in negative DNA supercoiling in vivo, and by this means organize and compact chromosomes. May achieve or facilitate chromosome segregation by condensation DNA from both sides of a centrally located replisome during cell division. The chain is Chromosome partition protein MukB from Escherichia coli O81 (strain ED1a).